Here is a 248-residue protein sequence, read N- to C-terminus: MWLCPLALTLTLMAASGAACEVKDICVGSPGIPGTPGSHGLPGRDGRDGVKGDPGPPGPMGPPGDMPCFPGNDGLPGAPGIPGECGEKGEPGERGPPGLPAHLDEELQATLHDFRHQILQTRGALSLQESILAIGGKVFSTNGQSATFDAIQEACARAGGHIAVPRSPEENEAIASFVKKYNTYAYVGLTEGPSPGDFRYSDGTPVNYTNWYPGEPAGRGTEQCVEMYTDGRWNDRNCLYNRLTICEF.

The N-terminal stretch at Met-1–Cys-20 is a signal peptide. Residues Gly-31–Pro-100 form the Collagen-like domain. Residues Pro-33 to Pro-100 are disordered. Over residues Pro-42–Lys-51 the composition is skewed to basic and acidic residues. Residues Pro-54–Asp-65 show a composition bias toward pro residues. Residues Ile-134–Glu-247 form the C-type lectin domain. 2 disulfide bridges follow: Cys-155-Cys-246 and Cys-224-Cys-238. N-linked (GlcNAc...) asparagine glycosylation is present at Asn-207. 4 residues coordinate Ca(2+): Glu-215, Ala-217, Asn-234, and Asp-235.

It belongs to the SFTPA family. As to quaternary structure, oligomeric complex of 6 set of homotrimers.

Its subcellular location is the secreted. The protein resides in the extracellular space. The protein localises to the extracellular matrix. It localises to the surface film. In presence of calcium ions, it binds to surfactant phospholipids and contributes to lower the surface tension at the air-liquid interface in the alveoli of the mammalian lung and is essential for normal respiration. Enhances the expression of MYO18A/SP-R210 on alveolar macrophages. This chain is Pulmonary surfactant-associated protein A (SFTPA1), found in Macaca mulatta (Rhesus macaque).